The sequence spans 110 residues: Minor capsid protein VP2 (110 aa).

This sequence belongs to the vesivirus VP2 protein family. Homooligomer. The portal-like structure consists in 12 copies of VP2. Interacts with capsid protein VP1.

It localises to the virion. It is found in the host cytoplasm. Its function is as follows. Minor structural protein that forms a portal-like structure at a unique three-fold axis of symmetry, following binding to the host receptor. The channel formed by VP2 may allow the delivery of the viral genome through the host endosomal membrane. The protein is Minor capsid protein VP2 of Otariidae (fur seals &amp; sea lions).